Consider the following 876-residue polypeptide: Alanine--tRNA ligase (876 aa).

The Zn(2+) site is built by His560, His564, Cys662, and His666.

Belongs to the class-II aminoacyl-tRNA synthetase family. Zn(2+) is required as a cofactor.

It localises to the cytoplasm. The enzyme catalyses tRNA(Ala) + L-alanine + ATP = L-alanyl-tRNA(Ala) + AMP + diphosphate. Catalyzes the attachment of alanine to tRNA(Ala) in a two-step reaction: alanine is first activated by ATP to form Ala-AMP and then transferred to the acceptor end of tRNA(Ala). Also edits incorrectly charged Ser-tRNA(Ala) and Gly-tRNA(Ala) via its editing domain. In Synechococcus sp. (strain ATCC 27144 / PCC 6301 / SAUG 1402/1) (Anacystis nidulans), this protein is Alanine--tRNA ligase.